The following is a 149-amino-acid chain: 5-hydroxytryptamine receptor 1E (149 aa).

At 1 to 6 (HQPANY) the chain is on the extracellular side. A helical transmembrane segment spans residues 7-31 (LICSLAVTDLLVAVLVMPLSIMYIV). Over 32–39 (MDSWRLGY) the chain is Cytoplasmic. Residues 40-65 (FICEVWLSVDMTCCTCSILHLCVIAL) form a helical membrane-spanning segment. The cysteines at positions 42 and 120 are disulfide-linked. Residues Asp49 and Cys53 each coordinate serotonin. The DRY motif; important for ligand-induced conformation changes signature appears at 66-68 (DRY). The Extracellular portion of the chain corresponds to 66-85 (DRYWAITNAIEYARKRTAKR). A helical transmembrane segment spans residues 86–104 (AGLMILTVWTISIFISMPP). The Cytoplasmic portion of the chain corresponds to 105–149 (LFWRSHRQLSPPPSQCAIQHDHVIYTIYSTLGAFYIPLTLILILY).

It belongs to the G-protein coupled receptor 1 family.

Its subcellular location is the cell membrane. Functionally, G-protein coupled receptor for 5-hydroxytryptamine (serotonin). Also functions as a receptor for various alkaloids and psychoactive substances. Ligand binding causes a conformation change that triggers signaling via guanine nucleotide-binding proteins (G proteins) and modulates the activity of downstream effectors, such as adenylate cyclase. HTR1E is coupled to G(i)/G(o) G alpha proteins and mediates inhibitory neurotransmission by inhibiting adenylate cyclase activity. The chain is 5-hydroxytryptamine receptor 1E (HTR1E) from Sus scrofa (Pig).